The chain runs to 130 residues: Iron-sulfur cluster insertion protein ErpA (130 aa).

Iron-sulfur cluster-binding residues include cysteine 46, cysteine 116, and cysteine 118.

The protein belongs to the HesB/IscA family. Homodimer. Requires iron-sulfur cluster as cofactor.

Its function is as follows. Required for insertion of 4Fe-4S clusters for at least IspG. The protein is Iron-sulfur cluster insertion protein ErpA of Legionella pneumophila (strain Paris).